The following is a 119-amino-acid chain: Ribonuclease P protein component (119 aa).

This sequence belongs to the RnpA family. In terms of assembly, consists of a catalytic RNA component (M1 or rnpB) and a protein subunit.

It carries out the reaction Endonucleolytic cleavage of RNA, removing 5'-extranucleotides from tRNA precursor.. Its function is as follows. RNaseP catalyzes the removal of the 5'-leader sequence from pre-tRNA to produce the mature 5'-terminus. It can also cleave other RNA substrates such as 4.5S RNA. The protein component plays an auxiliary but essential role in vivo by binding to the 5'-leader sequence and broadening the substrate specificity of the ribozyme. This chain is Ribonuclease P protein component, found in Salmonella paratyphi A (strain AKU_12601).